The chain runs to 399 residues: Cell division protein FtsZ (399 aa).

Residues 18–22, 105–107, Glu-136, Arg-140, and Asp-184 contribute to the GTP site; these read GGGVN and GTG. Positions 311-399 are disordered; that stretch reads GFDGGQPPSK…EELDVPDFLK (89 aa). Positions 388 to 399 are enriched in acidic residues; that stretch reads AAEELDVPDFLK.

It belongs to the FtsZ family. As to quaternary structure, homodimer. Polymerizes to form a dynamic ring structure in a strictly GTP-dependent manner. Interacts directly with several other division proteins.

It is found in the cytoplasm. Functionally, essential cell division protein that forms a contractile ring structure (Z ring) at the future cell division site. The regulation of the ring assembly controls the timing and the location of cell division. One of the functions of the FtsZ ring is to recruit other cell division proteins to the septum to produce a new cell wall between the dividing cells. Binds GTP and shows GTPase activity. This chain is Cell division protein FtsZ, found in Streptomyces coelicolor (strain ATCC BAA-471 / A3(2) / M145).